The chain runs to 100 residues: Cytochrome b (100 aa).

3 helical membrane-spanning segments follow: residues 1–21 (MGSL…FLAM), 45–66 (WLIR…YLHI), and 81–100 (WNIG…VGYV). His51 and His65 together coordinate heme b.

Belongs to the cytochrome b family. The cytochrome bc1 complex contains 3 respiratory subunits (MT-CYB, CYC1 and UQCRFS1), 2 core proteins (UQCRC1 and UQCRC2) and probably 6 low-molecular weight proteins. The cofactor is heme b.

It localises to the mitochondrion inner membrane. Functionally, component of the ubiquinol-cytochrome c reductase complex (complex III or cytochrome b-c1 complex) that is part of the mitochondrial respiratory chain. The b-c1 complex mediates electron transfer from ubiquinol to cytochrome c. Contributes to the generation of a proton gradient across the mitochondrial membrane that is then used for ATP synthesis. In Polypterus sp. (Bichir), this protein is Cytochrome b (mt-cyb).